The following is a 105-amino-acid chain: V-type ATP synthase subunit F (105 aa).

It belongs to the V-ATPase F subunit family.

Its function is as follows. Produces ATP from ADP in the presence of a proton gradient across the membrane. In Clostridium perfringens (strain 13 / Type A), this protein is V-type ATP synthase subunit F.